Here is a 227-residue protein sequence, read N- to C-terminus: Bone marrow proteoglycan (227 aa).

Positions 1–16 are cleaved as a signal peptide; sequence MKFPLLLALLVGGAFA. Residues 17–110 constitute a propeptide, acidic; it reads LHLSSEASDS…TSLMGDSGFK (94 aa). The segment at 21–105 is disordered; that stretch reads SEASDSKSPL…KEEDTTSLMG (85 aa). O-linked (GalNAc...) serine glycosylation is present at Ser24. Positions 34–46 are enriched in basic and acidic residues; sequence SLPREAEISRPEV. Positions 58 to 70 are enriched in acidic residues; that stretch reads LEEEEEEEEEEGS. O-linked (Xyl...) (chondroitin sulfate) serine glycosylation occurs at Ser70. A C-type lectin domain is found at 128–227; the sequence is LVCRSCYRGT…GKRRPFICAY (100 aa). 2 cysteine pairs are disulfide-bonded: Cys130–Cys225 and Cys202–Cys217.

Nitrated.

The protein resides in the secreted. In terms of biological role, cytotoxin and helminthotoxin. MBP also induces non-cytolytic histamine release from basophils. It is involved in antiparasitic defense mechanisms and immune hypersensitivity reactions. The chain is Bone marrow proteoglycan (Prg2) from Rattus norvegicus (Rat).